A 1365-amino-acid polypeptide reads, in one-letter code: Polyprotein ABA-1 (1365 aa).

It belongs to the NPA family. Post-translationally, nematode polyprotein allergens (NPAs) are synthesized as large polypeptides that are subsequently proteolytically cleaved to active polypeptide units. In terms of tissue distribution, pseudocoelomic fluid.

Has high binding affinity for fatty acids and retinoids. In Ascaris suum (Pig roundworm), this protein is Polyprotein ABA-1 (ABA-1).